Here is a 669-residue protein sequence, read N- to C-terminus: Putative transcription factor SOX-14 (669 aa).

Polar residues predominate over residues 1–12 (MIAKPNQATTEP). 3 disordered regions span residues 1 to 149 (MIAK…EMTL), 254 to 336 (YKYR…PKYE), and 419 to 439 (SSLTQSQHNQSDPTAGLMDNI). A compositionally biased stretch (low complexity) spans 17 to 37 (RPGTVPTVPATTPARPATITI). The segment covering 52 to 71 (TLPPFSPSPSPASSPSPAPA) has biased composition (pro residues). The segment covering 75–84 (GAQKTQSQAA) has biased composition (polar residues). Positions 88–105 (PAAVASPSAPVAAAAPKT) are enriched in low complexity. The span at 130 to 145 (RESEMDGERSPSHSGH) shows a compositional bias: basic and acidic residues. The segment at residues 187–255 (IKRPMNAFMV…LHMIEYPNYK (69 aa)) is a DNA-binding region (HMG box). Residues 284 to 294 (TTNNNNSLTTL) show a composition bias toward low complexity. Positions 295–318 (AINGTTTAGRKSKRSTSTCQSGSA) are enriched in polar residues. Residues 322–336 (LRNDSGDTSSKPKYE) are compositionally biased toward basic and acidic residues. Residues 419 to 431 (SSLTQSQHNQSDP) are compositionally biased toward polar residues.

The protein resides in the nucleus. The polypeptide is Putative transcription factor SOX-14 (Sox14) (Drosophila melanogaster (Fruit fly)).